Here is a 203-residue protein sequence, read N- to C-terminus: Translation initiation factor IF-3 (203 aa).

It belongs to the IF-3 family. As to quaternary structure, monomer.

The protein localises to the cytoplasm. Functionally, IF-3 binds to the 30S ribosomal subunit and shifts the equilibrium between 70S ribosomes and their 50S and 30S subunits in favor of the free subunits, thus enhancing the availability of 30S subunits on which protein synthesis initiation begins. The protein is Translation initiation factor IF-3 of Corynebacterium efficiens (strain DSM 44549 / YS-314 / AJ 12310 / JCM 11189 / NBRC 100395).